Reading from the N-terminus, the 640-residue chain is Large subunit GTPase 1 homolog (640 aa).

The 262-residue stretch at 165 to 426 folds into the CP-type G domain; sequence WRQLWRVIER…LCDCPGLVMP (262 aa). 213–216 contacts GTP; the sequence is NKAD. A disordered region spans residues 251 to 341; it reads AEERGEDAMD…ESTATSSFYN (91 aa). 3 stretches are compositionally biased toward acidic residues: residues 253-270, 290-304, and 320-331; these read ERGEDAMDQEDQSDTEEE, EKDENEQDEEEEGED, and ESGDEDHAEENP. The segment covering 332–341 has biased composition (polar residues); it reads ESTATSSFYN. Residues 375 to 382 and 419 to 422 each bind GTP; these read GYPNVGKS and DCPG. A disordered region spans residues 602-640; it reads GPVEAGKANTEQQAGKPWKKHGNRNKKEKVRRLNKHLDA. Residues 618–640 are compositionally biased toward basic residues; it reads PWKKHGNRNKKEKVRRLNKHLDA.

This sequence belongs to the TRAFAC class YlqF/YawG GTPase family. LSG1 subfamily.

The protein resides in the cytoplasm. Its subcellular location is the endoplasmic reticulum. It is found in the nucleus. It localises to the cajal body. It carries out the reaction GTP + H2O = GDP + phosphate + H(+). Its function is as follows. Functions as a GTPase. May act by mediating the release of NMD3 from the 60S ribosomal subunit after export into the cytoplasm during the 60S ribosomal subunit maturation. The sequence is that of Large subunit GTPase 1 homolog from Danio rerio (Zebrafish).